A 1548-amino-acid polypeptide reads, in one-letter code: UDP-glucose:glycoprotein glucosyltransferase (1548 aa).

An N-terminal signal peptide occupies residues Met-1 to Gly-22. Asn-181 carries an N-linked (GlcNAc...) asparagine glycan. Over residues Thr-243–Lys-253 the composition is skewed to basic and acidic residues. Positions Thr-243–Ala-265 are disordered. Asn-266 and Asn-864 each carry an N-linked (GlcNAc...) asparagine glycan. The segment at Ser-1227–Leu-1548 is glucosyltransferase. Over residues Glu-1512–Ala-1523 the composition is skewed to basic and acidic residues. A disordered region spans residues Glu-1512–Leu-1548. Positions His-1545–Leu-1548 match the Prevents secretion from ER motif.

This sequence belongs to the glycosyltransferase 8 family. As to quaternary structure, monomer. May interact with CG7484/Sep15. Requires Ca(2+) as cofactor. It depends on Mn(2+) as a cofactor.

It localises to the endoplasmic reticulum lumen. The protein resides in the endoplasmic reticulum-Golgi intermediate compartment. The catalysed reaction is N(4)-(alpha-D-Man-(1-&gt;2)-alpha-D-Man-(1-&gt;2)-alpha-D-Man-(1-&gt;3)-[alpha-D-Man-(1-&gt;2)-alpha-D-Man-(1-&gt;3)-[alpha-D-Man-(1-&gt;2)-alpha-D-Man-(1-&gt;6)]-alpha-D-Man-(1-&gt;6)]-beta-D-Man-(1-&gt;4)-beta-D-GlcNAc-(1-&gt;4)-beta-D-GlcNAc)-L-asparaginyl-[protein] (N-glucan mannose isomer 9A1,2,3B1,2,3) + UDP-alpha-D-glucose = N(4)-(alpha-D-Glc-(1-&gt;3)-alpha-D-Man-(1-&gt;2)-alpha-D-Man-(1-&gt;2)-alpha-D-Man-(1-&gt;3)-[alpha-D-Man-(1-&gt;2)-alpha-D-Man-(1-&gt;3)-[alpha-D-Man-(1-&gt;2)-alpha-D-Man-(1-&gt;6)]-alpha-D-Man-(1-&gt;6)]-beta-D-Man-(1-&gt;4)-beta-D-GlcNAc-(1-&gt;4)-beta-D-GlcNAc)-L-asparaginyl-[protein] + UDP + H(+). Its pathway is protein modification; protein glycosylation. In terms of biological role, recognizes glycoproteins with minor folding defects. Reglucosylates single N-glycans near the misfolded part of the protein, thus providing quality control for protein folding in the endoplasmic reticulum. Reglucosylated proteins are recognized by calreticulin for recycling to the endoplasmic reticulum and refolding or degradation. The sequence is that of UDP-glucose:glycoprotein glucosyltransferase from Drosophila melanogaster (Fruit fly).